A 98-amino-acid chain; its full sequence is MPGITREEVAHLARLARLELKAEELDHFAGQLDDIIGAVARVSEVADQDVPPTSHPLPLTNVMRADEVRPSLTPEQALSGAPAQEQQRFKVPQILGED.

The interval 70–98 is disordered; it reads PSLTPEQALSGAPAQEQQRFKVPQILGED.

This sequence belongs to the GatC family. As to quaternary structure, heterotrimer of A, B and C subunits.

It catalyses the reaction L-glutamyl-tRNA(Gln) + L-glutamine + ATP + H2O = L-glutaminyl-tRNA(Gln) + L-glutamate + ADP + phosphate + H(+). The catalysed reaction is L-aspartyl-tRNA(Asn) + L-glutamine + ATP + H2O = L-asparaginyl-tRNA(Asn) + L-glutamate + ADP + phosphate + 2 H(+). Functionally, allows the formation of correctly charged Asn-tRNA(Asn) or Gln-tRNA(Gln) through the transamidation of misacylated Asp-tRNA(Asn) or Glu-tRNA(Gln) in organisms which lack either or both of asparaginyl-tRNA or glutaminyl-tRNA synthetases. The reaction takes place in the presence of glutamine and ATP through an activated phospho-Asp-tRNA(Asn) or phospho-Glu-tRNA(Gln). The sequence is that of Aspartyl/glutamyl-tRNA(Asn/Gln) amidotransferase subunit C from Streptomyces avermitilis (strain ATCC 31267 / DSM 46492 / JCM 5070 / NBRC 14893 / NCIMB 12804 / NRRL 8165 / MA-4680).